The chain runs to 122 residues: Large ribosomal subunit protein uL18 (122 aa).

It belongs to the universal ribosomal protein uL18 family. Part of the 50S ribosomal subunit; part of the 5S rRNA/L5/L18/L25 subcomplex. Contacts the 5S and 23S rRNAs.

This is one of the proteins that bind and probably mediate the attachment of the 5S RNA into the large ribosomal subunit, where it forms part of the central protuberance. This is Large ribosomal subunit protein uL18 from Thermosipho africanus (strain TCF52B).